The chain runs to 391 residues: 1-deoxy-D-xylulose 5-phosphate reductoisomerase (391 aa).

NADPH contacts are provided by threonine 10, glycine 11, serine 12, isoleucine 13, asparagine 38, and asparagine 122. Position 123 (lysine 123) interacts with 1-deoxy-D-xylulose 5-phosphate. Glutamate 124 lines the NADPH pocket. Aspartate 148 is a Mn(2+) binding site. 1-deoxy-D-xylulose 5-phosphate is bound by residues serine 149, glutamate 150, serine 173, and histidine 196. Glutamate 150 serves as a coordination point for Mn(2+). Residue glycine 202 coordinates NADPH. Serine 209, asparagine 214, lysine 215, and glutamate 218 together coordinate 1-deoxy-D-xylulose 5-phosphate. Glutamate 218 contacts Mn(2+).

This sequence belongs to the DXR family. Mg(2+) serves as cofactor. The cofactor is Mn(2+).

It catalyses the reaction 2-C-methyl-D-erythritol 4-phosphate + NADP(+) = 1-deoxy-D-xylulose 5-phosphate + NADPH + H(+). Its pathway is isoprenoid biosynthesis; isopentenyl diphosphate biosynthesis via DXP pathway; isopentenyl diphosphate from 1-deoxy-D-xylulose 5-phosphate: step 1/6. Catalyzes the NADPH-dependent rearrangement and reduction of 1-deoxy-D-xylulose-5-phosphate (DXP) to 2-C-methyl-D-erythritol 4-phosphate (MEP). This Wolbachia pipientis subsp. Culex pipiens (strain wPip) protein is 1-deoxy-D-xylulose 5-phosphate reductoisomerase.